Consider the following 474-residue polypeptide: Nitrosuccinate lyase (474 aa).

Ser-295 functions as the Proton acceptor in the catalytic mechanism. Residues Lys-301 and Asn-303 each contribute to the fumarate site. Arg-334 (proton donor) is an active-site residue.

It belongs to the class-II fumarase/aspartase family.

It catalyses the reaction 2-nitrobutanedioate = fumarate + nitrite + H(+). Involved in the biosynthesis of desferrioxamine derivatives which have iron-binding properties and may act as siderophores. Catalyzes the formation of nitrous acid from nitrosuccinic acid (2-nitrobutanedioate) by elimination of its nitro group. This Streptomyces davaonensis (strain DSM 101723 / JCM 4913 / KCC S-0913 / 768) protein is Nitrosuccinate lyase.